The sequence spans 278 residues: Phosphatidylglycerol--prolipoprotein diacylglyceryl transferase (278 aa).

3 helical membrane passes run leucine 13–valine 33, valine 50–valine 70, and asparagine 89–threonine 109. Arginine 135 lines the a 1,2-diacyl-sn-glycero-3-phospho-(1'-sn-glycerol) pocket. The next 3 membrane-spanning stretches (helical) occupy residues glutamine 175–leucine 195, glycine 205–leucine 225, and isoleucine 236–valine 256.

This sequence belongs to the Lgt family.

The protein localises to the cell membrane. The catalysed reaction is L-cysteinyl-[prolipoprotein] + a 1,2-diacyl-sn-glycero-3-phospho-(1'-sn-glycerol) = an S-1,2-diacyl-sn-glyceryl-L-cysteinyl-[prolipoprotein] + sn-glycerol 1-phosphate + H(+). The protein operates within protein modification; lipoprotein biosynthesis (diacylglyceryl transfer). In terms of biological role, catalyzes the transfer of the diacylglyceryl group from phosphatidylglycerol to the sulfhydryl group of the N-terminal cysteine of a prolipoprotein, the first step in the formation of mature lipoproteins. The polypeptide is Phosphatidylglycerol--prolipoprotein diacylglyceryl transferase (Enterococcus faecalis (strain ATCC 700802 / V583)).